Reading from the N-terminus, the 182-residue chain is CD-NTase-associated protein 15 (182 aa).

2 helical membrane passes run 11–31 (ITGWFTVIFFLLLIIVSCTVW) and 33–53 (IGWIDIISYTVTISTFITIGY).

Belongs to the CBASS Cap15 membrane effector family. The beta barrel domain oligomerizes; in the presence of cyclic nucleotides (probably 3',2'-cGAMP) higher-level oligomers occur.

It localises to the cell membrane. In terms of biological role, effector protein of a CBASS antivirus system. CBASS (cyclic oligonucleotide-based antiphage signaling system) provides immunity against bacteriophage. The CD-NTase protein (CdnE) synthesizes cyclic nucleotides in response to infection; these serve as specific second messenger signals. The signals activate a diverse range of effectors, leading to bacterial cell death and thus abortive phage infection. This system triggers membrane disruption without lysis. A type I-B CBASS system. Binds cyclic nucleotide second messenger 3',2'-cGAMP, probably oligomerizing, and induces cell membrane shrinkage and rupture, leading to cell death. Its function is as follows. Protects S.aureus against phage infection. When the CBASS operon (cdnE-cap15) is introduced in S.aureus strain RN4220 there is strong protection against lytic DNA phages 80alpha-vir and phi-NM1-gamma-6 but little to no protection against phages phi-NM4-gamma-4 or phi-12-gamma-3. The polypeptide is CD-NTase-associated protein 15 (Staphylococcus schleiferi).